Consider the following 461-residue polypeptide: Cysteine--tRNA ligase (461 aa).

Zn(2+) is bound at residue Cys-28. The 'HIGH' region signature appears at Ile-30–His-40. Residues Cys-209, His-234, and Glu-238 each coordinate Zn(2+). Positions Lys-266–Ser-270 match the 'KMSKS' region motif. Residue Lys-269 participates in ATP binding.

The protein belongs to the class-I aminoacyl-tRNA synthetase family. In terms of assembly, monomer. It depends on Zn(2+) as a cofactor.

It localises to the cytoplasm. The catalysed reaction is tRNA(Cys) + L-cysteine + ATP = L-cysteinyl-tRNA(Cys) + AMP + diphosphate. The protein is Cysteine--tRNA ligase of Escherichia coli (strain K12 / MC4100 / BW2952).